A 266-amino-acid polypeptide reads, in one-letter code: Protein-ADP-ribose hydrolase (266 aa).

The Macro domain occupies 74 to 265 (TDLKDLKPIK…LYKEAFNRDA (192 aa)). Asp93, Ile94, and Asn107 together coordinate ADP-D-ribose. The Zn(2+) site is built by Cys113, His118, and Cys120. Cys120, Ile121, Asp122, Ser212, Thr213, Gly214, and Phe216 together coordinate ADP-D-ribose.

The protein belongs to the MacroD-type family. Zn-Macro subfamily. Zn(2+) is required as a cofactor.

The catalysed reaction is 4-O-(ADP-D-ribosyl)-L-aspartyl-[protein] + H2O = L-aspartyl-[protein] + ADP-D-ribose + H(+). Its function is as follows. ADP-ribosylhydrolase that specifically reverses the SirTM-mediated mono-ADP-ribosylation at an asparatate residue of GcvH-L, by releasing ADP-ribose from the target protein. May play a role in the regulation of the response to host-induced oxidative stress. This chain is Protein-ADP-ribose hydrolase, found in Staphylococcus aureus (strain COL).